The primary structure comprises 230 residues: ATP-dependent dethiobiotin synthetase BioD (230 aa).

Residue 12–17 coordinates ATP; the sequence is DIGKTH. Residue T16 coordinates Mg(2+). K37 is a catalytic residue. Substrate is bound at residue S41. Residues D52, 115–118, and 175–176 each bind ATP; these read EGAG and SE. 2 residues coordinate Mg(2+): D52 and E115.

Belongs to the dethiobiotin synthetase family. Homodimer. The cofactor is Mg(2+).

Its subcellular location is the cytoplasm. The catalysed reaction is (7R,8S)-7,8-diammoniononanoate + CO2 + ATP = (4R,5S)-dethiobiotin + ADP + phosphate + 3 H(+). Its pathway is cofactor biosynthesis; biotin biosynthesis; biotin from 7,8-diaminononanoate: step 1/2. Catalyzes a mechanistically unusual reaction, the ATP-dependent insertion of CO2 between the N7 and N8 nitrogen atoms of 7,8-diaminopelargonic acid (DAPA, also called 7,8-diammoniononanoate) to form a ureido ring. In Caulobacter sp. (strain K31), this protein is ATP-dependent dethiobiotin synthetase BioD.